A 179-amino-acid chain; its full sequence is Large ribosomal subunit protein uL5 (179 aa).

The protein belongs to the universal ribosomal protein uL5 family. Part of the 50S ribosomal subunit; part of the 5S rRNA/L5/L18/L25 subcomplex. Contacts the 5S rRNA and the P site tRNA. Forms a bridge to the 30S subunit in the 70S ribosome.

This is one of the proteins that bind and probably mediate the attachment of the 5S RNA into the large ribosomal subunit, where it forms part of the central protuberance. In the 70S ribosome it contacts protein S13 of the 30S subunit (bridge B1b), connecting the 2 subunits; this bridge is implicated in subunit movement. Contacts the P site tRNA; the 5S rRNA and some of its associated proteins might help stabilize positioning of ribosome-bound tRNAs. The sequence is that of Large ribosomal subunit protein uL5 from Shewanella oneidensis (strain ATCC 700550 / JCM 31522 / CIP 106686 / LMG 19005 / NCIMB 14063 / MR-1).